A 91-amino-acid chain; its full sequence is Early E3B 10.4 kDa protein (91 aa).

Residues 1-22 (MIPRNFFFTILICPFNVCATFT) form the signal peptide. The Lumenal segment spans residues 23-34 (AVATASPDCIGP). The helical transmembrane segment at 35 to 60 (FASYALFAFVTCICVCSIVCLVINFF) threads the bilayer. Residues 61–91 (QLVDWIFVRIAYLRHHPEYRNQNVAALLRLI) lie on the Cytoplasmic side of the membrane.

It belongs to the adenoviridae E3B family.

It is found in the host endoplasmic reticulum membrane. Its function is as follows. Down-regulates the EGF receptor. The sequence is that of Early E3B 10.4 kDa protein from Human adenovirus B serotype 3 (HAdV-3).